We begin with the raw amino-acid sequence, 98 residues long: Complement inhibitor RaCI1 (98 aa).

Positions 1–20 (MNAMLVLFIASALFISEHNT) are cleaved as a signal peptide. Disulfide bonds link Cys33-Cys57, Cys38-Cys59, and Cys53-Cys74. Residues 79-98 (TTKPPMAPGDNKDNKEEESN) are disordered. Residues 88-98 (DNKDNKEEESN) are compositionally biased toward basic and acidic residues.

The protein belongs to the RaCI family. As to expression, expressed in salivary glands.

The protein localises to the secreted. Complement inhibitor. Prevents complement-mediated C5 activation by binding to C5. Binds C5 at a different binding site than the other tick complement inhibitors OmCI and CirpT1, and the drug eculizumab. Inhibits the complement in human and guinea pig but not in other species tested (rabbit, rat, mouse, and pig). This is Complement inhibitor RaCI1 from Rhipicephalus appendiculatus (Brown ear tick).